A 471-amino-acid chain; its full sequence is A-type ATP synthase subunit B (471 aa).

It belongs to the ATPase alpha/beta chains family. In terms of assembly, has multiple subunits with at least A(3), B(3), C, D, E, F, H, I and proteolipid K(x).

Its subcellular location is the cell membrane. Functionally, component of the A-type ATP synthase that produces ATP from ADP in the presence of a proton gradient across the membrane. The B chain is a regulatory subunit. The polypeptide is A-type ATP synthase subunit B (Halobacterium salinarum (strain ATCC 29341 / DSM 671 / R1)).